Reading from the N-terminus, the 89-residue chain is Histone H3.v2 (89 aa).

Belongs to the histone H3 family.

The polypeptide is Histone H3.v2 (H3v2) (Dictyostelium discoideum (Social amoeba)).